We begin with the raw amino-acid sequence, 254 residues long: 3-deoxy-manno-octulosonate cytidylyltransferase (254 aa).

The protein belongs to the KdsB family.

Its subcellular location is the cytoplasm. The enzyme catalyses 3-deoxy-alpha-D-manno-oct-2-ulosonate + CTP = CMP-3-deoxy-beta-D-manno-octulosonate + diphosphate. It functions in the pathway nucleotide-sugar biosynthesis; CMP-3-deoxy-D-manno-octulosonate biosynthesis; CMP-3-deoxy-D-manno-octulosonate from 3-deoxy-D-manno-octulosonate and CTP: step 1/1. Its pathway is bacterial outer membrane biogenesis; lipopolysaccharide biosynthesis. Its function is as follows. Activates KDO (a required 8-carbon sugar) for incorporation into bacterial lipopolysaccharide in Gram-negative bacteria. This Bordetella petrii (strain ATCC BAA-461 / DSM 12804 / CCUG 43448) protein is 3-deoxy-manno-octulosonate cytidylyltransferase.